Reading from the N-terminus, the 1505-residue chain is MADRFSRFNEDRDFQGNHFDQYEEGHLEIEQASLDKPIESDNIGHRLLQKHGWKLGQGLGKSLQGRTDPIPIVVKYDVMGMGRMEMELDYAEDATERRRVLEVEKEDTEELRQKYKDYVDKEKAIAKALEDLRANFYCELCDKQYQKHQEFDNHINSYDHAHKQRLKDLKQREFARNVSSRSRKDEKKQEKALRRLHELAEQRKQAECAPGSGPMFRPTTVAVDEDGGEEDKDESSTNSGASAVSSCGFGADFSTDKGGSFTSVQITNTTGLSQAPGLASQGISFGIKNNLGPPLQKLGVSFSFAKKAPVKLESIASVFKDHAEEGSSEDGTKADEKSSDQGVQKVGDTDGTGNLDGKKEDEDPQDGGSLASTLSKLKRMKREEGTGATEPEYYHYIPPAHCKVKPNFPFLLFMRASEQMEGDHSAHSKSAPENRKSSSPKPQGCSKTAASPGAERTVSEASELQKEAAVAGPSEPGGKTETKKGSGGGEDEQSVESRETSESPMCESNPKDISQATPATKAGQGPKHPTGPFFPVLSKDESTALQWPSELLIFTKAEPSISYSCNPLYFDFKLSRNKDAKAKGTEKPKDVAGSSKDHLQSLDPREPNKSQEEEQDVVLSSEGRVDEPASGAACSSLNKQEPGGSHMSETEDTGRSHPSKKEPSGKSHRHKKKKKHKKSSKHKRKHKADTEEKSSKAESGEKSKKRKKRKRKKNKSSAAADSERGPKSEPPGSGSPAPPRRRRRAQDDSQRRSLPAEEGNSGKKDDGGGGSSCQDHSGRKHKGEPPTSSCQRRANTKHSSRSSHRSQPSSGDEDSDDASSHRLHQKSPSQYSEEEEEEEEEEEEEDEDSGSEHSRSRSRSGHRHSSHRSSRRSYSSSSDASSDQSCYSRQHSYSDDSYSDYSDRSRRHSKRSHDSDDSDYTSSKHRSKRHKYSSSDDDYSLSCSQSRSRSRSHTRERSRSRGRSRSSSCSRSRSKRRSRSTTAHSWQRSRSYSRDRSRSTRSPSQRSGSRKGSWGHESPEERRSGRRDFIRSKIYRSQSPHYFQSGRGEGPGKKEDGRGDDSKGAGLPSQNSNTGTGRGSESDCSPEDKNSVTARLLLEKIQSRKVERKPNVCEEVLATPNKAGLKYKNPPQGYFGPKLPPSLGNKPVLPMIGKLPATRKSNKKCEESGLERGEEQEHSEPEEGSPRSSDAPFGHQFSEEAAGPLSDPPPEEPKSEEATADHSVAPLGTPAHTDCYPGDPAISHNYLPDPSDGDTLESLDSGSQPGPVESSLLPIAPDLEHFPNYAPPSGEPSIESTDGTEDASLAPLESQPITFTPEEMEKYSKLQQAAQQHIQQQLLAKQVKAFPASTALAPATPALQPIHIQQPATASATSITTVQHAILQHHAAAAAAAIGIHPHPHPQPLAQVHHIPQPHLTPISLSHLTHSIIPGHPATFLASHPIHIIPASAIHPGPFTFHPVPHAALYPTLLAPRPAAAAATALHLHPLLHPIFSGQDLQHPPSHGT.

Positions 40–86 (SDNIGHRLLQKHGWKLGQGLGKSLQGRTDPIPIVVKYDVMGMGRMEM) constitute a G-patch domain. Positions 89–124 (DYAEDATERRRVLEVEKEDTEELRQKYKDYVDKEKA) form a coiled coil. The segment at 136–160 (FYCELCDKQYQKHQEFDNHINSYDH) adopts a C2H2-type zinc-finger fold. 2 stretches are compositionally biased toward basic and acidic residues: residues 166 to 175 (LKDLKQREFA) and 182 to 206 (SRKD…RKQA). Positions 166–244 (LKDLKQREFA…SSTNSGASAV (79 aa)) are disordered. Over residues 223-233 (VDEDGGEEDKD) the composition is skewed to acidic residues. A Glycyl lysine isopeptide (Lys-Gly) (interchain with G-Cter in SUMO2) cross-link involves residue K311. Basic and acidic residues-rich tracts occupy residues 322 to 339 (HAEE…EKSS) and 421 to 436 (EGDH…ENRK). 2 disordered regions span residues 322–393 (HAEE…EPEY) and 419–537 (QMEG…FPVL). The segment covering 437–449 (SSSPKPQGCSKTA) has biased composition (polar residues). Residue K479 is modified to N6-acetyllysine. K573 participates in a covalent cross-link: Glycyl lysine isopeptide (Lys-Gly) (interchain with G-Cter in SUMO2). Composition is skewed to basic and acidic residues over residues 575 to 612 (SRNK…KSQE) and 648 to 665 (SETE…EPSG). A disordered region spans residues 575-1304 (SRNKDAKAKG…ESTDGTEDAS (730 aa)). Position 648 is a phosphoserine (S648). Residues 666-687 (KSHRHKKKKKHKKSSKHKRKHK) are compositionally biased toward basic residues. The span at 688 to 702 (ADTEEKSSKAESGEK) shows a compositional bias: basic and acidic residues. Residues 703–715 (SKKRKKRKRKKNK) are compositionally biased toward basic residues. A phosphoserine mark is found at S733, S735, and S753. Residues 745–767 (AQDDSQRRSLPAEEGNSGKKDDG) show a composition bias toward basic and acidic residues. Basic residues predominate over residues 794 to 804 (ANTKHSSRSSH). A compositionally biased stretch (acidic residues) spans 832–849 (SEEEEEEEEEEEEEDEDS). Residues 856-871 (SRSRSGHRHSSHRSSR) are compositionally biased toward basic residues. Low complexity predominate over residues 872 to 900 (RSYSSSSDASSDQSCYSRQHSYSDDSYSD). S915 and S918 each carry phosphoserine. Basic residues predominate over residues 923–932 (SKHRSKRHKY). 5 positions are modified to phosphoserine: S985, S1013, S1018, S1037, and S1039. Residues 1017 to 1031 (ESPEERRSGRRDFIR) are compositionally biased toward basic and acidic residues. Residues 1050-1063 (GPGKKEDGRGDDSK) are compositionally biased toward basic and acidic residues. Residue S1085 is modified to Phosphoserine. 3 stretches are compositionally biased toward basic and acidic residues: residues 1097–1112 (LLEK…KPNV), 1163–1185 (KKCE…EEGS), and 1211–1220 (EEPKSEEATA). K1109 participates in a covalent cross-link: Glycyl lysine isopeptide (Lys-Gly) (interchain with G-Cter in SUMO2). At S1179 the chain carries Phosphoserine.

This chain is G patch domain-containing protein 8 (Gpatch8), found in Mus musculus (Mouse).